We begin with the raw amino-acid sequence, 1115 residues long: Lateral signaling target protein 2 homolog (1115 aa).

Disordered stretches follow at residues 308–488 (PLGS…DSDS), 545–586 (SEDD…PSTS), 600–742 (RLPS…SLSD), and 879–1027 (VQSS…PDGK). The span at 322–361 (NNSSSTTNTSNNNNNNTNNNNSSSGSDCTNNDKTGTTTNT) shows a compositional bias: low complexity. Over residues 363-373 (KPVERLVDHRN) the composition is skewed to basic and acidic residues. 2 stretches are compositionally biased toward low complexity: residues 374 to 417 (NNTT…TPTA) and 425 to 444 (PSHS…NSPA). Residues 449-488 (YDDDDEDDDDDDVHADVEEDEDESGILDSDEHDLNDDSDS) show a composition bias toward acidic residues. 2 stretches are compositionally biased toward low complexity: residues 558–577 (QQQQ…QQQQ) and 600–614 (RLPS…SSNN). Residues S603 and S604 each carry the phosphoserine modification. Polar residues predominate over residues 615–628 (QQMTIKSPSEQTTT). Residues 632–655 (SNRHRHHSHHHHHHHHSHHHHHHQ) show a composition bias toward basic residues. The span at 658-676 (AAVAVAAAQDEQHNNNQPH) shows a compositional bias: low complexity. The span at 677 to 706 (SHSHSSSHHHHHNHQSHSHPHRANRSTRKR) shows a compositional bias: basic residues. Composition is skewed to low complexity over residues 714–726 (TITT…GGEQ), 733–742 (DSSTASSLSD), and 881–901 (SSNS…AARS). S908 bears the Phosphoserine mark. Composition is skewed to low complexity over residues 921-975 (QQQQ…SPVS) and 988-1020 (TTTT…MSPP). The FYVE-type zinc-finger motif lies at 1025–1085 (DGKAPRCMSC…VCRECFMREV (61 aa)). Zn(2+) is bound by residues C1031, C1034, C1047, C1050, C1055, C1058, C1077, and C1080. Residues 1088 to 1115 (SHSHGQSQSQIHSPTQQAGGRPQAASAS) form a disordered region. The span at 1090–1100 (SHGQSQSQIHS) shows a compositional bias: low complexity.

Belongs to the lst-2 family.

Its function is as follows. Negative regulator of epidermal growth factor receptor (EGFR) signaling. The sequence is that of Lateral signaling target protein 2 homolog from Drosophila grimshawi (Hawaiian fruit fly).